Reading from the N-terminus, the 141-residue chain is Sec-independent protein translocase protein TatB (141 aa).

Residues 2–22 (FANVGWGEMLVLVIAGLVILG) traverse the membrane as a helical segment. The segment at 92–141 (IFTGRFDSTSSDQPGSGKPPKPQSGPGPAAASGPAATTTPASTPFDPDAT) is disordered. Over residues 117 to 141 (PGPAAASGPAATTTPASTPFDPDAT) the composition is skewed to low complexity.

This sequence belongs to the TatB family. In terms of assembly, the Tat system comprises two distinct complexes: a TatABC complex, containing multiple copies of TatA, TatB and TatC subunits, and a separate TatA complex, containing only TatA subunits. Substrates initially bind to the TatABC complex, which probably triggers association of the separate TatA complex to form the active translocon.

It localises to the cell membrane. Functionally, part of the twin-arginine translocation (Tat) system that transports large folded proteins containing a characteristic twin-arginine motif in their signal peptide across membranes. Together with TatC, TatB is part of a receptor directly interacting with Tat signal peptides. TatB may form an oligomeric binding site that transiently accommodates folded Tat precursor proteins before their translocation. This chain is Sec-independent protein translocase protein TatB, found in Mycolicibacterium gilvum (strain PYR-GCK) (Mycobacterium gilvum (strain PYR-GCK)).